A 417-amino-acid polypeptide reads, in one-letter code: Gamma-glutamyl phosphate reductase (417 aa).

This sequence belongs to the gamma-glutamyl phosphate reductase family.

Its subcellular location is the cytoplasm. It catalyses the reaction L-glutamate 5-semialdehyde + phosphate + NADP(+) = L-glutamyl 5-phosphate + NADPH + H(+). Its pathway is amino-acid biosynthesis; L-proline biosynthesis; L-glutamate 5-semialdehyde from L-glutamate: step 2/2. Catalyzes the NADPH-dependent reduction of L-glutamate 5-phosphate into L-glutamate 5-semialdehyde and phosphate. The product spontaneously undergoes cyclization to form 1-pyrroline-5-carboxylate. The protein is Gamma-glutamyl phosphate reductase of Escherichia fergusonii (strain ATCC 35469 / DSM 13698 / CCUG 18766 / IAM 14443 / JCM 21226 / LMG 7866 / NBRC 102419 / NCTC 12128 / CDC 0568-73).